We begin with the raw amino-acid sequence, 553 residues long: Dihydroxy-acid dehydratase (553 aa).

Mg(2+) is bound at residue aspartate 78. Cysteine 119 provides a ligand contact to [2Fe-2S] cluster. Aspartate 120 and lysine 121 together coordinate Mg(2+). Lysine 121 carries the N6-carboxylysine modification. Cysteine 193 is a binding site for [2Fe-2S] cluster. Glutamate 441 contacts Mg(2+). Serine 467 serves as the catalytic Proton acceptor.

This sequence belongs to the IlvD/Edd family. In terms of assembly, homodimer. The cofactor is [2Fe-2S] cluster. It depends on Mg(2+) as a cofactor.

It catalyses the reaction (2R)-2,3-dihydroxy-3-methylbutanoate = 3-methyl-2-oxobutanoate + H2O. It carries out the reaction (2R,3R)-2,3-dihydroxy-3-methylpentanoate = (S)-3-methyl-2-oxopentanoate + H2O. It participates in amino-acid biosynthesis; L-isoleucine biosynthesis; L-isoleucine from 2-oxobutanoate: step 3/4. Its pathway is amino-acid biosynthesis; L-valine biosynthesis; L-valine from pyruvate: step 3/4. Its function is as follows. Functions in the biosynthesis of branched-chain amino acids. Catalyzes the dehydration of (2R,3R)-2,3-dihydroxy-3-methylpentanoate (2,3-dihydroxy-3-methylvalerate) into 2-oxo-3-methylpentanoate (2-oxo-3-methylvalerate) and of (2R)-2,3-dihydroxy-3-methylbutanoate (2,3-dihydroxyisovalerate) into 2-oxo-3-methylbutanoate (2-oxoisovalerate), the penultimate precursor to L-isoleucine and L-valine, respectively. The polypeptide is Dihydroxy-acid dehydratase (Geobacter sulfurreducens (strain ATCC 51573 / DSM 12127 / PCA)).